We begin with the raw amino-acid sequence, 1896 residues long: Obscurin-like protein 1 (1896 aa).

S10 is subject to Phosphoserine. In terms of domain architecture, Ig-like 1 spans 12–100; the sequence is PCFLRFPRPV…GEAYAAAAVT (89 aa). The tract at residues 17-19 is interaction with TTN; sequence FPR. Cysteines 33 and 84 form a disulfide. Residues 85-94 form an interaction with TTN region; that stretch reads RARNAAGEAY. The tract at residues 106-127 is disordered; the sequence is ASDPELQPAERPLPSPGSGEGA. 3 consecutive Ig-like domains span residues 128-225, 243-330, and 339-425; these read PVFL…ALLQ, PVVE…QTLS, and PRLR…ANVT. Intrachain disulfides connect C149–C209, C267–C319, and C362–C412. The region spanning 517-615 is the Fibronectin type-III domain; it reads PPGPPILAEM…FHGSAHLVPT (99 aa). Ig-like domains are found at residues 714–800, 804–893, 902–982, 986–1075, 1078–1172, 1174–1261, 1265–1357, 1357–1534, 1628–1720, and 1794–1896; these read PVHI…FGVT, PPVH…VTIT, PSGK…FTVT, PPVR…VTVT, PERI…PPVQ, LALE…FTVQ, PPVR…VEEP, PLLV…ARLS, PVTI…RTVA, and PAQS…VEGN. Cystine bridges form between C738–C788, C829–C879, C920–C970, C1011–C1061, C1103–C1153, and C1195–C1245. 2 disulfides stabilise this stretch: C1381–C1522 and C1650–C1700.

Component of the 3M complex, composed of core components CUL7, CCDC8 and OBSL1. Interacts with CCDC8. Interacts with CUL7; the interaction is direct. Interacts with FBXW8. Interacts (via N-terminal Ig-like domain) with TTN/titin (via C-terminal Ig-like domain); the interaction is direct. Widely expressed, with predominant levels found in the heart.

It is found in the cytoplasm. The protein localises to the cytoskeleton. It localises to the microtubule organizing center. Its subcellular location is the centrosome. The protein resides in the perinuclear region. It is found in the golgi apparatus. Functionally, core component of the 3M complex, a complex required to regulate microtubule dynamics and genome integrity. It is unclear how the 3M complex regulates microtubules, it could act by controlling the level of a microtubule stabilizer. Acts as a regulator of the Cul7-RING(FBXW8) ubiquitin-protein ligase, playing a critical role in the ubiquitin ligase pathway that regulates Golgi morphogenesis and dendrite patterning in brain. Required to localize CUL7 to the Golgi apparatus in neurons. The polypeptide is Obscurin-like protein 1 (Homo sapiens (Human)).